A 1058-amino-acid polypeptide reads, in one-letter code: UPF0507 protein YALI0E18612g (1058 aa).

In terms of domain architecture, VPS9 spans threonine 252–alanine 394.

This sequence belongs to the UPF0507 family.

The protein is UPF0507 protein YALI0E18612g of Yarrowia lipolytica (strain CLIB 122 / E 150) (Yeast).